A 101-amino-acid polypeptide reads, in one-letter code: Small ribosomal subunit protein uS14 (101 aa).

The segment at 1–20 (MAKTSQVNRNKRREKMAARD) is disordered.

The protein belongs to the universal ribosomal protein uS14 family. In terms of assembly, part of the 30S ribosomal subunit. Contacts proteins S3 and S10.

Binds 16S rRNA, required for the assembly of 30S particles and may also be responsible for determining the conformation of the 16S rRNA at the A site. This Acidiphilium cryptum (strain JF-5) protein is Small ribosomal subunit protein uS14.